The chain runs to 207 residues: Histone H1-like protein HC2 (207 aa).

2 stretches are compositionally biased toward basic residues: residues 1–50 and 59–72; these read MLGV…KTVA and PAAK…APVR. A disordered region spans residues 1–72; sequence MLGVQKKRST…KTAAKKAPVR (72 aa). 3 consecutive repeat copies span residues 35–58, 71–94, and 113–136. Residues 35-136 form a 3 X 24 AA repeats of V-R-K-V-A-A-K-K-T-V-A-R-K-T-V-A-K-K-A-V-A-A-R-K region; sequence VRKVAAKKTV…VAKKAVAARK (102 aa).

It belongs to the histone H1/H5 family. HCT subfamily.

Might have a role in establishing the nucleoid structure of elementary bodies. The sequence is that of Histone H1-like protein HC2 (hctB) from Chlamydia muridarum (strain MoPn / Nigg).